Reading from the N-terminus, the 241-residue chain is Chaperone protein HifB (241 aa).

An N-terminal signal peptide occupies residues 1 to 27 (MGKTMFKKTLLFFTALFFAALCAFSAN).

It belongs to the periplasmic pilus chaperone family.

It is found in the periplasm. Functionally, mediates assembly of pili by forming soluble multimeric complexes with pili subunits as an intermediate step in the assembly process. This protein is involved in type B pili (HifA) assembly. The sequence is that of Chaperone protein HifB (hifB) from Haemophilus influenzae.